A 203-amino-acid chain; its full sequence is Urease accessory protein UreG (203 aa).

14–21 contacts GTP; sequence GPVGAGKT.

Belongs to the SIMIBI class G3E GTPase family. UreG subfamily. In terms of assembly, homodimer. UreD, UreF and UreG form a complex that acts as a GTP-hydrolysis-dependent molecular chaperone, activating the urease apoprotein by helping to assemble the nickel containing metallocenter of UreC. The UreE protein probably delivers the nickel.

Its subcellular location is the cytoplasm. In terms of biological role, facilitates the functional incorporation of the urease nickel metallocenter. This process requires GTP hydrolysis, probably effectuated by UreG. The protein is Urease accessory protein UreG of Jannaschia sp. (strain CCS1).